We begin with the raw amino-acid sequence, 112 residues long: Protein preY, mitochondrial (112 aa).

Residues Met1–Leu34 constitute a mitochondrion transit peptide. Residues His49 to Gln95 form the TRM112 domain.

Belongs to the PREY family. In terms of assembly, interacts (via TRM112 domain) with NDUFAF5; the interaction is direct and stabilizes NDUFAF5 protein. Interacts with COQ5; the interaction is direct, stabilizes COQ5 protein and associates PYURF with COQ enzyme complex.

It is found in the mitochondrion. Functionally, in mitochondria, S-adenosylmethionine-dependent methyltransferase chaperone that supports both coenzyme Q biosynthesis, by stabilizing its components, such as COQ5, and NADH:ubiquinone oxidoreductase complex (complex I, MT-ND1) assembly, by stabilizing complex I assembly factors, such as NDUFAF5. This is Protein preY, mitochondrial (Pyurf) from Mus musculus (Mouse).